The following is a 290-amino-acid chain: ATP synthase gamma chain (290 aa).

This sequence belongs to the ATPase gamma chain family. As to quaternary structure, F-type ATPases have 2 components, CF(1) - the catalytic core - and CF(0) - the membrane proton channel. CF(1) has five subunits: alpha(3), beta(3), gamma(1), delta(1), epsilon(1). CF(0) has three main subunits: a, b and c.

It is found in the cell membrane. Functionally, produces ATP from ADP in the presence of a proton gradient across the membrane. The gamma chain is believed to be important in regulating ATPase activity and the flow of protons through the CF(0) complex. The chain is ATP synthase gamma chain from Roseiflexus sp. (strain RS-1).